Here is a 59-residue protein sequence, read N- to C-terminus: UPF0434 protein COSY_0767 (59 aa).

It belongs to the UPF0434 family.

This chain is UPF0434 protein COSY_0767, found in Vesicomyosocius okutanii subsp. Calyptogena okutanii (strain HA).